The primary structure comprises 195 residues: L-rhamnose-binding lectin CSL2 (195 aa).

SUEL-type lectin domains are found at residues 1–97 (TRVV…YTCL) and 104–195 (TCEG…YTCG).

In terms of biological role, L-rhamnose binding lectin. Has hemagglutinating activity towards rabbit erythrocytes and human type B erythrocytes. Hemagglutinating activity is inhibited by smooth-type lipopolysaccharide (LPS) from S.flexneri 1A and E.coli K12, but not by rough-type LPS from S.flexneri, E.coli K12 and E.coli EH100. Agglutinates E.coli K12 and B.subtilis. This is L-rhamnose-binding lectin CSL2 from Oncorhynchus keta (Chum salmon).